Consider the following 493-residue polypeptide: tRNA(Ile)-lysidine synthase (493 aa).

Position 26-31 (26-31 (SGGSDS)) interacts with ATP.

It belongs to the tRNA(Ile)-lysidine synthase family.

It is found in the cytoplasm. The catalysed reaction is cytidine(34) in tRNA(Ile2) + L-lysine + ATP = lysidine(34) in tRNA(Ile2) + AMP + diphosphate + H(+). In terms of biological role, ligates lysine onto the cytidine present at position 34 of the AUA codon-specific tRNA(Ile) that contains the anticodon CAU, in an ATP-dependent manner. Cytidine is converted to lysidine, thus changing the amino acid specificity of the tRNA from methionine to isoleucine. The polypeptide is tRNA(Ile)-lysidine synthase (Bartonella henselae (strain ATCC 49882 / DSM 28221 / CCUG 30454 / Houston 1) (Rochalimaea henselae)).